Here is a 232-residue protein sequence, read N- to C-terminus: MIFQTPLVTGRLERRYKRFLADVTLDDGRFITASVPNTGSMLGLTAPGSRVWLSVSDAPHRKYAHTLQIVEADNTLVGVNTGLPNRIAEEAILNSLIPDLAGYASLKREQKYGRNSRIDLLLDDGPRQRAYVEVKNVHFIRTLGLAEFPDTVTARGAKHLDELVDVVAAGHRGVMLFIIQRNDCSRFSISGDLDPTYARAFERARANGVEAWAVRCHITDKSIDASELVPIE.

This sequence belongs to the SfsA family.

In Brucella anthropi (strain ATCC 49188 / DSM 6882 / CCUG 24695 / JCM 21032 / LMG 3331 / NBRC 15819 / NCTC 12168 / Alc 37) (Ochrobactrum anthropi), this protein is Sugar fermentation stimulation protein homolog.